The sequence spans 95 residues: Antitoxin VapB41 (95 aa).

Its function is as follows. Antitoxin component of a type II toxin-antitoxin (TA) system. The chain is Antitoxin VapB41 (vapB41) from Mycobacterium tuberculosis (strain CDC 1551 / Oshkosh).